A 361-amino-acid polypeptide reads, in one-letter code: UDP-N-acetylglucosamine--N-acetylmuramyl-(pentapeptide) pyrophosphoryl-undecaprenol N-acetylglucosamine transferase (361 aa).

UDP-N-acetyl-alpha-D-glucosamine-binding positions include 11–13 (TGG), N124, R162, S193, and Q292.

This sequence belongs to the glycosyltransferase 28 family. MurG subfamily.

The protein localises to the cell inner membrane. It carries out the reaction di-trans,octa-cis-undecaprenyl diphospho-N-acetyl-alpha-D-muramoyl-L-alanyl-D-glutamyl-meso-2,6-diaminopimeloyl-D-alanyl-D-alanine + UDP-N-acetyl-alpha-D-glucosamine = di-trans,octa-cis-undecaprenyl diphospho-[N-acetyl-alpha-D-glucosaminyl-(1-&gt;4)]-N-acetyl-alpha-D-muramoyl-L-alanyl-D-glutamyl-meso-2,6-diaminopimeloyl-D-alanyl-D-alanine + UDP + H(+). It participates in cell wall biogenesis; peptidoglycan biosynthesis. In terms of biological role, cell wall formation. Catalyzes the transfer of a GlcNAc subunit on undecaprenyl-pyrophosphoryl-MurNAc-pentapeptide (lipid intermediate I) to form undecaprenyl-pyrophosphoryl-MurNAc-(pentapeptide)GlcNAc (lipid intermediate II). This is UDP-N-acetylglucosamine--N-acetylmuramyl-(pentapeptide) pyrophosphoryl-undecaprenol N-acetylglucosamine transferase from Elusimicrobium minutum (strain Pei191).